The following is a 453-amino-acid chain: Glutamyl-tRNA reductase (453 aa).

Substrate-binding positions include 52–55 (TCNR), Ser-105, 110–112 (EDQ), and Gln-116. Catalysis depends on Cys-53, which acts as the Nucleophile. 184-189 (GAGEMA) contacts NADP(+). Residues 413-424 (PGLEPEPTELPT) are compositionally biased toward low complexity. A disordered region spans residues 413–453 (PGLEPEPTELPTVPDGPEGVPEELRERMSSGMLEQFSTNDD).

Belongs to the glutamyl-tRNA reductase family. In terms of assembly, homodimer.

The catalysed reaction is (S)-4-amino-5-oxopentanoate + tRNA(Glu) + NADP(+) = L-glutamyl-tRNA(Glu) + NADPH + H(+). It participates in porphyrin-containing compound metabolism; protoporphyrin-IX biosynthesis; 5-aminolevulinate from L-glutamyl-tRNA(Glu): step 1/2. Catalyzes the NADPH-dependent reduction of glutamyl-tRNA(Glu) to glutamate 1-semialdehyde (GSA). This Natronomonas pharaonis (strain ATCC 35678 / DSM 2160 / CIP 103997 / JCM 8858 / NBRC 14720 / NCIMB 2260 / Gabara) (Halobacterium pharaonis) protein is Glutamyl-tRNA reductase.